Here is a 163-residue protein sequence, read N- to C-terminus: Lysosomal enzyme trafficking factor (163 aa).

Helical transmembrane passes span 40-60 and 98-118; these read MGWI…YYVF and LPFW…FLFL.

It belongs to the LYSET family. In terms of assembly, interacts with GNPTAB; this interaction is important for proper localization of GNPTAB in Golgi stacks. Interacts with MBTPS1.

It is found in the golgi apparatus membrane. In terms of biological role, required for mannose-6-phosphate-dependent trafficking of lysosomal enzymes. LYSET bridges GlcNAc-1-phosphate transferase (GNPTAB), to the membrane-bound transcription factor site-1 protease (MBTPS1), thus allowing proteolytic activation of the GNPTAB. GNPTAB is involved in the regulation of M6P-dependent Golgi-to-lysosome trafficking of lysosomal enzymes. LYSET is thus an essential factor for maturation and delivery of lysosomal hydrolases. (Microbial infection) Essential for infection by muliple viruses, including SARS-CoV-2, that utilize activated cathepsins for entry after M6P-dependent lysosomal transport. In Homo sapiens (Human), this protein is Lysosomal enzyme trafficking factor.